Consider the following 688-residue polypeptide: PR domain zinc finger protein 8 (688 aa).

In terms of domain architecture, SET spans 16-131 (KAVQQCLTDI…KDEELLVWYG (116 aa)). Y130 contributes to the S-adenosyl-L-methionine binding site. The C2H2-type 1 zinc-finger motif lies at 154-182 (YTCLECSQRFQFEFPYVAHLRFRCPKRLH). Disordered regions lie at residues 184–309 (TDAN…GCKG) and 397–506 (EEAA…PARS). Residues 192–208 (QGGGLGTKDHGGGGGGK) show a composition bias toward gly residues. Low complexity-rich tracts occupy residues 209–219 (EQQQQQQQQQQ) and 275–284 (GSSSCVAAPG). Composition is skewed to gly residues over residues 414 to 424 (AGGGVAGGGSN) and 470 to 489 (LGGG…GGGQ). 2 C2H2-type zinc fingers span residues 624-647 (NWCA…RSHH) and 665-687 (LKCP…MTSH).

It belongs to the class V-like SAM-binding methyltransferase superfamily. Interacts with BHLHE22. Interacts with EPM2A and NHLRC1. This interaction sequesters EPM2A and NHLRC1 to the nucleus. Expressed in brain, heart, liver, testes, retina. Highest expression is observed in the retina and hippocampus; moderately expressed in the cortex and cerebellum. In the retina, it is expressed in bipolar and amacrine cells.

The protein localises to the nucleus. Its function is as follows. Probable histone methyltransferase, preferentially acting on 'Lys-9' of histone H3. Histone methyltransferase activity has not been confirmed in other species. Involved in the control of steroidogenesis through transcriptional repression of steroidogenesis marker genes such as CYP17A1 and LHCGR. Forms with BHLHE22 a transcriptional repressor complex controlling genes involved in neural development and neuronal differentiation. In the retina, it is required for rod bipolar and type 2 OFF-cone bipolar cell survival. This Mus musculus (Mouse) protein is PR domain zinc finger protein 8 (Prdm8).